A 421-amino-acid polypeptide reads, in one-letter code: UDP-N-acetylglucosamine 1-carboxyvinyltransferase 1 (421 aa).

Phosphoenolpyruvate is bound at residue 22 to 23; that stretch reads KN. Position 94 (Arg94) interacts with UDP-N-acetyl-alpha-D-glucosamine. The active-site Proton donor is Cys118. Cys118 is modified (2-(S-cysteinyl)pyruvic acid O-phosphothioketal). Residues 123-127, Asp310, and Val332 contribute to the UDP-N-acetyl-alpha-D-glucosamine site; that span reads RPIEL.

Belongs to the EPSP synthase family. MurA subfamily.

It is found in the cytoplasm. It carries out the reaction phosphoenolpyruvate + UDP-N-acetyl-alpha-D-glucosamine = UDP-N-acetyl-3-O-(1-carboxyvinyl)-alpha-D-glucosamine + phosphate. It participates in cell wall biogenesis; peptidoglycan biosynthesis. Its function is as follows. Cell wall formation. Adds enolpyruvyl to UDP-N-acetylglucosamine. The chain is UDP-N-acetylglucosamine 1-carboxyvinyltransferase 1 from Clostridium perfringens (strain 13 / Type A).